The following is a 422-amino-acid chain: Solanesyl diphosphate synthase 3, chloroplastic/mitochondrial (422 aa).

The N-terminal 32 residues, 1–32, are a transit peptide targeting the chloroplast and mitochondrion; the sequence is MLFTRSVARISSKFLRNRSFYGSSQSLASHRF. The isopentenyl diphosphate site is built by Lys125, Arg128, and His174. Mg(2+) contacts are provided by Asp181 and Asp185. Residue Arg190 coordinates an all-trans-polyprenyl diphosphate. Position 191 (Arg191) interacts with isopentenyl diphosphate. The an all-trans-polyprenyl diphosphate site is built by Lys267, Thr268, Gln305, and Lys322.

It belongs to the FPP/GGPP synthase family. In terms of assembly, homodimer. Requires Mg(2+) as cofactor. Ubiquitous. Highest expression in seeds and shoot apical meristem.

It is found in the plastid. It localises to the chloroplast. The protein localises to the mitochondrion. It carries out the reaction 5 isopentenyl diphosphate + (2E,6E,10E)-geranylgeranyl diphosphate = all-trans-nonaprenyl diphosphate + 5 diphosphate. Its function is as follows. May be involved in the supply of solanesyl diphosphate for ubiquinone-9 (UQ-9) biosynthesis in mitochondria. Synthesizes C25 to C45 medium / long-chain products depending on the type of substrate available. Can use geranyl diphosphate, farnesyl diphosphate or geranylgeranyl diphosphate as substrates, but not dimethylallyl diphosphate. The chain is Solanesyl diphosphate synthase 3, chloroplastic/mitochondrial from Arabidopsis thaliana (Mouse-ear cress).